The primary structure comprises 72 residues: Hypertrehalosaemic prohormone (72 aa).

The N-terminal stretch at 1-21 (MNHLVKVLIVVVAIALVLCEA) is a signal peptide. Glutamine 22 is subject to Pyrrolidone carboxylic acid. Threonine 31 carries the threonine amide modification.

Belongs to the AKH/HRTH/RPCH family. Expressed in corpora cardiaca.

It localises to the secreted. Hypertrehalosaemic factors are neuropeptides that elevate the level of trehalose in the hemolymph (trehalose is the major carbohydrate in the hemolymph of insects). This Blaberus discoidalis (Tropical cockroach) protein is Hypertrehalosaemic prohormone.